We begin with the raw amino-acid sequence, 498 residues long: UDP-N-acetylmuramoylalanine--D-glutamate ligase (498 aa).

119-125 is an ATP binding site; that stretch reads GTNGKST.

This sequence belongs to the MurCDEF family.

The protein localises to the cytoplasm. The enzyme catalyses UDP-N-acetyl-alpha-D-muramoyl-L-alanine + D-glutamate + ATP = UDP-N-acetyl-alpha-D-muramoyl-L-alanyl-D-glutamate + ADP + phosphate + H(+). It participates in cell wall biogenesis; peptidoglycan biosynthesis. Its function is as follows. Cell wall formation. Catalyzes the addition of glutamate to the nucleotide precursor UDP-N-acetylmuramoyl-L-alanine (UMA). This is UDP-N-acetylmuramoylalanine--D-glutamate ligase from Wolbachia sp. subsp. Brugia malayi (strain TRS).